The primary structure comprises 312 residues: MKWSEISIHTTEEAVEAVSHILHEAGASGVAIEDPAELTKEREQQYGEIYALNPDEYPAEGVLIKAYFPQTDSLHETIAGVKSSIDVLPSYDIEIGTGNITVNEVNEEDWATAWKKYYHPVQISDTFTIVPTWEEYTPSSPEEKIIELDPGMAFGTGTHPTTTMCIRALERTVQPGNTIIDVGTGSGVLSIAAAKLGASSVQAYDLDPVAVESAEMNVRLNKTDDIVSVGQNSLLEGIEGPVDLIVANLLAEIILLFPEDAARVVKSGGLFITSGIIAAKEKVISEALEKAGFTIEEVLRMEDWVAIIARNA.

S-adenosyl-L-methionine-binding residues include threonine 162, glycine 183, aspartate 205, and asparagine 248.

It belongs to the methyltransferase superfamily. PrmA family.

The protein localises to the cytoplasm. The catalysed reaction is L-lysyl-[protein] + 3 S-adenosyl-L-methionine = N(6),N(6),N(6)-trimethyl-L-lysyl-[protein] + 3 S-adenosyl-L-homocysteine + 3 H(+). Its function is as follows. Methylates ribosomal protein L11. The protein is Ribosomal protein L11 methyltransferase of Bacillus cereus (strain Q1).